Reading from the N-terminus, the 234-residue chain is Ribose-5-phosphate isomerase A (234 aa).

Substrate contacts are provided by residues 28–31, 85–88, and 98–101; these read TGST, DGAD, and KGLG. Glutamate 107 functions as the Proton acceptor in the catalytic mechanism. Lysine 125 serves as a coordination point for substrate.

The protein belongs to the ribose 5-phosphate isomerase family. In terms of assembly, homodimer.

The enzyme catalyses aldehydo-D-ribose 5-phosphate = D-ribulose 5-phosphate. It participates in carbohydrate degradation; pentose phosphate pathway; D-ribose 5-phosphate from D-ribulose 5-phosphate (non-oxidative stage): step 1/1. Its function is as follows. Catalyzes the reversible conversion of ribose-5-phosphate to ribulose 5-phosphate. In Roseiflexus castenholzii (strain DSM 13941 / HLO8), this protein is Ribose-5-phosphate isomerase A.